We begin with the raw amino-acid sequence, 220 residues long: Iron-sulfur cluster repair protein YtfE (220 aa).

The protein belongs to the RIC family. YtfE subfamily. As to quaternary structure, homodimer.

Its subcellular location is the cytoplasm. Di-iron-containing protein involved in the repair of iron-sulfur clusters damaged by oxidative and nitrosative stress conditions. The polypeptide is Iron-sulfur cluster repair protein YtfE (Salmonella typhimurium (strain LT2 / SGSC1412 / ATCC 700720)).